The sequence spans 295 residues: Acetylglutamate kinase (295 aa).

Substrate-binding positions include 70-71 (GG), arginine 92, and asparagine 191.

The protein belongs to the acetylglutamate kinase family. ArgB subfamily.

Its subcellular location is the cytoplasm. It carries out the reaction N-acetyl-L-glutamate + ATP = N-acetyl-L-glutamyl 5-phosphate + ADP. Its pathway is amino-acid biosynthesis; L-arginine biosynthesis; N(2)-acetyl-L-ornithine from L-glutamate: step 2/4. Its function is as follows. Catalyzes the ATP-dependent phosphorylation of N-acetyl-L-glutamate. This is Acetylglutamate kinase from Mycolicibacterium paratuberculosis (strain ATCC BAA-968 / K-10) (Mycobacterium paratuberculosis).